Here is a 415-residue protein sequence, read N- to C-terminus: Serine hydroxymethyltransferase (415 aa).

Residues L117 and 121-123 (GHL) each bind (6S)-5,6,7,8-tetrahydrofolate. Residue K226 is modified to N6-(pyridoxal phosphate)lysine. A (6S)-5,6,7,8-tetrahydrofolate-binding site is contributed by 349–351 (SPF).

The protein belongs to the SHMT family. Homodimer. Pyridoxal 5'-phosphate serves as cofactor.

It is found in the cytoplasm. The enzyme catalyses (6R)-5,10-methylene-5,6,7,8-tetrahydrofolate + glycine + H2O = (6S)-5,6,7,8-tetrahydrofolate + L-serine. It functions in the pathway one-carbon metabolism; tetrahydrofolate interconversion. Its pathway is amino-acid biosynthesis; glycine biosynthesis; glycine from L-serine: step 1/1. In terms of biological role, catalyzes the reversible interconversion of serine and glycine with tetrahydrofolate (THF) serving as the one-carbon carrier. This reaction serves as the major source of one-carbon groups required for the biosynthesis of purines, thymidylate, methionine, and other important biomolecules. Also exhibits THF-independent aldolase activity toward beta-hydroxyamino acids, producing glycine and aldehydes, via a retro-aldol mechanism. This is Serine hydroxymethyltransferase from Geobacter sp. (strain M21).